Here is a 345-residue protein sequence, read N- to C-terminus: Dihydroorotate dehydrogenase (quinone) (345 aa).

FMN is bound by residues 65-69 (AGLDK) and Thr-89. Residue Lys-69 participates in substrate binding. Residue 114-118 (NRLGF) coordinates substrate. Residues Asn-146 and Asn-179 each contribute to the FMN site. Asn-179 lines the substrate pocket. Ser-182 acts as the Nucleophile in catalysis. Position 184 (Asn-184) interacts with substrate. The FMN site is built by Lys-224 and Thr-252. A substrate-binding site is contributed by 253–254 (NT). FMN-binding positions include Gly-275, Gly-304, and 325-326 (YT).

Belongs to the dihydroorotate dehydrogenase family. Type 2 subfamily. Monomer. It depends on FMN as a cofactor.

Its subcellular location is the cell membrane. It carries out the reaction (S)-dihydroorotate + a quinone = orotate + a quinol. Its pathway is pyrimidine metabolism; UMP biosynthesis via de novo pathway; orotate from (S)-dihydroorotate (quinone route): step 1/1. Catalyzes the conversion of dihydroorotate to orotate with quinone as electron acceptor. In Leptothrix cholodnii (strain ATCC 51168 / LMG 8142 / SP-6) (Leptothrix discophora (strain SP-6)), this protein is Dihydroorotate dehydrogenase (quinone).